Consider the following 361-residue polypeptide: Phospho-N-acetylmuramoyl-pentapeptide-transferase (361 aa).

Transmembrane regions (helical) follow at residues 25 to 45 (RTVLAALTALIISFIVGPAMI), 73 to 93 (TMGGALILVSIAITTLLWADL), 97 to 117 (YVWIVLITTLGFGMIGWVDDY), 134 to 154 (LFWQSAIAILVALYLVLTAEL), 168 to 188 (VAVPLGVTGFVALTYFVIVGT), 200 to 220 (GLAIMPTVMISSALAIFSYVA), 237 to 257 (AGELAVFCGALAGAGLAFLWF), 264 to 284 (VFMGDVGALALGAALGIVTVI), 289 to 309 (IVMLIMGGVFVVETLSVMLQV), and 338 to 358 (QVVVRFWIITMMLVLFGLSSL).

The protein belongs to the glycosyltransferase 4 family. MraY subfamily. Requires Mg(2+) as cofactor.

It is found in the cell inner membrane. It catalyses the reaction UDP-N-acetyl-alpha-D-muramoyl-L-alanyl-gamma-D-glutamyl-meso-2,6-diaminopimeloyl-D-alanyl-D-alanine + di-trans,octa-cis-undecaprenyl phosphate = di-trans,octa-cis-undecaprenyl diphospho-N-acetyl-alpha-D-muramoyl-L-alanyl-D-glutamyl-meso-2,6-diaminopimeloyl-D-alanyl-D-alanine + UMP. It functions in the pathway cell wall biogenesis; peptidoglycan biosynthesis. Catalyzes the initial step of the lipid cycle reactions in the biosynthesis of the cell wall peptidoglycan: transfers peptidoglycan precursor phospho-MurNAc-pentapeptide from UDP-MurNAc-pentapeptide onto the lipid carrier undecaprenyl phosphate, yielding undecaprenyl-pyrophosphoryl-MurNAc-pentapeptide, known as lipid I. The sequence is that of Phospho-N-acetylmuramoyl-pentapeptide-transferase from Nitrosospira multiformis (strain ATCC 25196 / NCIMB 11849 / C 71).